Reading from the N-terminus, the 138-residue chain is Trypsin inhibitor DE5 alpha chain (138 aa).

Cysteines 40 and 86 form a disulfide.

It belongs to the protease inhibitor I3 (leguminous Kunitz-type inhibitor) family. In terms of assembly, heterodimer of an alpha and a beta chain linked by a disulfide bond.

Inhibition of trypsin. The polypeptide is Trypsin inhibitor DE5 alpha chain (Adenanthera pavonina (Sandal bead tree)).